The chain runs to 877 residues: MVESSDTPKDTAAVPKCPPPCPEASPAEPLPNGDLEADGAQWKGTEEGGASPKSGRPEEDETESLADGETGRALENGRCTPKEGLDAPADEGELAPSDPQKKRGRRKLLEATEKSKEEKEENNFDSLKMEGSRGRLRGGLGWESSLRQRPMQRHTFQAGDPYYISKRKRDEWLARWKREAEKKAKVIAVMNVVEETPRAEPQKEEEASPPASQQPTDPASPNVATTPEPVVADAVDKNTSKSADDEPEYEDGRGLGIGELVWGKLRGFSWWPGRIVSWWMTGRSRAAEGTRWVMWFGDGKFSVVCVEKLLPLSSFSSAFHQATYNKQPMYRKAIYEVLQVASSRAGKIFPACPENDETDTSKVVEIQNKQMIEWALGGFQPSGPKGLEPPEEERNPYKEVYTEMWVEPEAAAYAPPPPAKKPRKSTTEKPKVKEIIDERTRERLVYEVRQKCRNIEDICISCGSLNVTLEHPLFIGGMCQNCKNCFLECAYQYDDDGYQSYCTICCGGREVLMCGNNNCCRCFCVECVDLLVGPGAAQAAIKEDPWNCYMCGHKGVYGLLRRREDWPSRLQMFFANNHDQEFDPPKVYPPVPAEKRKPIRVLSLFDGIATGLLVLKDLGIQVDRYIASEVCEDSITVGMVRHQGKIMYVGDVRNVTQKHIQEWGPFDLVIGGSPCNDLSIVNPARKGLYEGTGRLFFEFYRLLHEARPKEGDDRPFFWLFENVVAMGVSDKRDISRFLESNPVMIDAKEVSAAHRARYFWGNLPGMNRPLASTVNDKLELQECLEHGRIAKFSKVRTITTRSNSIKQGKDQHFPVFMNEKEDILWCTEMERVFGFPVHYTDVSNMSRLARQRLLGRSWSVPVIRHLFAPLKEYFACV.

3 disordered regions span residues 1-154 (MVES…MQRH), 194-250 (EETP…PEYE), and 412-431 (AYAP…EKPK). 2 stretches are compositionally biased toward basic and acidic residues: residues 107–133 (KLLE…EGSR) and 195–206 (ETPRAEPQKEEE). Polar residues predominate over residues 210–225 (PASQQPTDPASPNVAT). One can recognise a PWWP domain in the interval 226–284 (TPEPVVADAVDKNTSKSADDEPEYEDGRGLGIGELVWGKLRGFSWWPGRIVSWWMTGRS). The segment covering 234–244 (AVDKNTSKSAD) has biased composition (basic and acidic residues). Positions 447–579 (EVRQKCRNIE…LQMFFANNHD (133 aa)) constitute an ADD domain. The segment at 458–488 (ICISCGSLNVTLEHPLFIGGMCQNCKNCFLE) adopts a GATA-type; atypical zinc-finger fold. The PHD-type; atypical zinc-finger motif lies at 499–555 (QSYCTICCGGREVLMCGNNNCCRCFCVECVDLLVGPGAAQAAIKEDPWNCYMCGHKG). Positions 599–877 (IRVLSLFDGI…APLKEYFACV (279 aa)) constitute an SAM-dependent MTase C5-type domain. Residues 606-610 (DGIAT), glutamate 629, and 651-653 (DVR) each bind S-adenosyl-L-methionine. Residue cysteine 675 is part of the active site. Residue 856–858 (RSW) coordinates S-adenosyl-L-methionine.

This sequence belongs to the class I-like SAM-binding methyltransferase superfamily. C5-methyltransferase family.

It is found in the nucleus. The protein localises to the chromosome. It localises to the cytoplasm. The enzyme catalyses a 2'-deoxycytidine in DNA + S-adenosyl-L-methionine = a 5-methyl-2'-deoxycytidine in DNA + S-adenosyl-L-homocysteine + H(+). It carries out the reaction L-cysteinyl-[protein] + S-adenosyl-L-methionine = S-methyl-L-cysteinyl-[protein] + S-adenosyl-L-homocysteine + H(+). Functionally, required for genome-wide de novo methylation and is essential for development. DNA methylation is coordinated with methylation of histones. It modifies DNA in a non-processive manner and also methylates non-CpG sites. Acts as a transcriptional corepressor for ZNF238. Can actively repress transcription through the recruitment of HDAC activity. Also has weak auto-methylation activity on some Cys residue in absence of DNA. The sequence is that of DNA (cytosine-5)-methyltransferase 3A (DNMT3A) from Gallus gallus (Chicken).